Reading from the N-terminus, the 618-residue chain is 1-deoxy-D-xylulose-5-phosphate synthase (618 aa).

Residues histidine 70 and 111 to 113 (GHS) each bind thiamine diphosphate. Mg(2+) is bound at residue aspartate 142. Thiamine diphosphate-binding positions include 143 to 144 (GS), asparagine 171, tyrosine 278, and glutamate 360. Residue asparagine 171 participates in Mg(2+) binding.

Belongs to the transketolase family. DXPS subfamily. Homodimer. The cofactor is Mg(2+). Thiamine diphosphate is required as a cofactor.

The enzyme catalyses D-glyceraldehyde 3-phosphate + pyruvate + H(+) = 1-deoxy-D-xylulose 5-phosphate + CO2. It functions in the pathway metabolic intermediate biosynthesis; 1-deoxy-D-xylulose 5-phosphate biosynthesis; 1-deoxy-D-xylulose 5-phosphate from D-glyceraldehyde 3-phosphate and pyruvate: step 1/1. Its function is as follows. Catalyzes the acyloin condensation reaction between C atoms 2 and 3 of pyruvate and glyceraldehyde 3-phosphate to yield 1-deoxy-D-xylulose-5-phosphate (DXP). The polypeptide is 1-deoxy-D-xylulose-5-phosphate synthase (Helicobacter pylori (strain G27)).